Here is a 930-residue protein sequence, read N- to C-terminus: Isoleucine--tRNA ligase (930 aa).

Positions 57–67 (PYANGNIHVGH) match the 'HIGH' region motif. Glu554 serves as a coordination point for L-isoleucyl-5'-AMP. The short motif at 595 to 599 (KMSKS) is the 'KMSKS' region element. Lys598 contacts ATP. Zn(2+) contacts are provided by Cys888, Cys891, Cys908, and Cys911.

It belongs to the class-I aminoacyl-tRNA synthetase family. IleS type 1 subfamily. Monomer. Zn(2+) is required as a cofactor.

The protein resides in the cytoplasm. The catalysed reaction is tRNA(Ile) + L-isoleucine + ATP = L-isoleucyl-tRNA(Ile) + AMP + diphosphate. In terms of biological role, catalyzes the attachment of isoleucine to tRNA(Ile). As IleRS can inadvertently accommodate and process structurally similar amino acids such as valine, to avoid such errors it has two additional distinct tRNA(Ile)-dependent editing activities. One activity is designated as 'pretransfer' editing and involves the hydrolysis of activated Val-AMP. The other activity is designated 'posttransfer' editing and involves deacylation of mischarged Val-tRNA(Ile). The protein is Isoleucine--tRNA ligase of Streptococcus pneumoniae (strain P1031).